The chain runs to 392 residues: Phospho-N-acetylmuramoyl-pentapeptide-transferase (392 aa).

11 helical membrane-spanning segments follow: residues 24–44, 76–96, 100–120, 137–157, 170–190, 193–213, 225–245, 262–282, 289–309, 314–334, and 369–389; these read YLTM…LLAG, TMGG…WFDL, FVWI…VDDW, YFWQ…CISE, WVQS…VPFF, VSYP…IVGA, GLAI…AYVT, SGEL…FLWF, VFMG…IAVI, IVLA…MLQV, and QVVI…LSTL.

This sequence belongs to the glycosyltransferase 4 family. MraY subfamily. The cofactor is Mg(2+).

It is found in the cell inner membrane. The enzyme catalyses UDP-N-acetyl-alpha-D-muramoyl-L-alanyl-gamma-D-glutamyl-meso-2,6-diaminopimeloyl-D-alanyl-D-alanine + di-trans,octa-cis-undecaprenyl phosphate = di-trans,octa-cis-undecaprenyl diphospho-N-acetyl-alpha-D-muramoyl-L-alanyl-D-glutamyl-meso-2,6-diaminopimeloyl-D-alanyl-D-alanine + UMP. Its pathway is cell wall biogenesis; peptidoglycan biosynthesis. Catalyzes the initial step of the lipid cycle reactions in the biosynthesis of the cell wall peptidoglycan: transfers peptidoglycan precursor phospho-MurNAc-pentapeptide from UDP-MurNAc-pentapeptide onto the lipid carrier undecaprenyl phosphate, yielding undecaprenyl-pyrophosphoryl-MurNAc-pentapeptide, known as lipid I. In Delftia acidovorans (strain DSM 14801 / SPH-1), this protein is Phospho-N-acetylmuramoyl-pentapeptide-transferase.